The following is a 465-amino-acid chain: ATP-dependent RNA helicase ddx19 (465 aa).

Basic and acidic residues predominate over residues 1-20; sequence MSEKETNTTSTENKEKEKQE. The interval 1–45 is disordered; it reads MSEKETNTTSTENKEKEKQEQTNTNSTTESTNNQVDEEYERPGRS. Residues 21-34 show a composition bias toward low complexity; that stretch reads QTNTNSTTESTNNQ. A Q motif motif is present at residues 70 to 98; that stretch reads KTFEELGLKPELLKGVYAMGYNKPSKIQE. The region spanning 102 to 268 is the Helicase ATP-binding domain; it reads PIIIQSPNNL…KKIVQDPYTS (167 aa). 115–122 provides a ligand contact to ATP; the sequence is SQSGTGKT. The DEAD box signature appears at 215–218; the sequence is DEAD. The region spanning 297–449 is the Helicase C-terminal domain; the sequence is ILSDIYGFIS…ELKSSEIESL (153 aa).

The protein belongs to the DEAD box helicase family. DDX19/DBP5 subfamily.

It catalyses the reaction ATP + H2O = ADP + phosphate + H(+). ATP-binding RNA helicase required for normal differentiation and development. The protein is ATP-dependent RNA helicase ddx19 (helC) of Dictyostelium discoideum (Social amoeba).